The following is a 1238-amino-acid chain: Virulence sensor protein BvgS (1238 aa).

The N-terminal stretch at 1–32 is a signal peptide; the sequence is MPAPHRLYPRSLICLAQALLVWALLAWAPAQA. Residues 33-307 are Cytoplasmic-facing; that stretch reads SQELTLVGKA…REQQWMANHP (275 aa). Residues 308–331 traverse the membrane as a helical segment; the sequence is VVKVAVLNLFAPFTLFRTDEQFGG. Over 332 to 541 the chain is Periplasmic; sequence ISAAVLQLLQ…PRTWYAYRNE (210 aa). The chain crosses the membrane as a helical span at residues 542 to 563; the sequence is IYLLIGLGLLSALLFLSWIVYL. Over 564–1238 the chain is Cytoplasmic; sequence RRQIRQRKRA…LEQRPHQGQP (675 aa). Residues 580 to 651 enclose the PAS domain; sequence QLEFMRVLID…MHEFLLTRMA (72 aa). The region spanning 652 to 708 is the PAC domain; the sequence is AEREPRFEDRDVTLHGRTRHVYQWTVPYGDSLGELKGIIGGWIDITERAELLRELHD. In terms of domain architecture, Histidine kinase spans 726–948; the sequence is TMSHEIRTPM…TVSVDLRLTM (223 aa). His729 carries the phosphohistidine; by autocatalysis modification. The 122-residue stretch at 974-1095 folds into the Response regulatory domain; the sequence is RVLVVDDHKP…ALRQRLNEAA (122 aa). Position 1023 is a 4-aspartylphosphate (Asp1023). The HPt domain occupies 1133–1228; that stretch reads DEALIRQLLE…AALETQLRAW (96 aa). His1172 carries the phosphohistidine modification.

Activation requires a sequential transfer of a phosphate group from a His in the primary transmitter domain, to an Asp in the receiver domain and to a His in the secondary transmitter domain.

The protein resides in the cell inner membrane. It carries out the reaction ATP + protein L-histidine = ADP + protein N-phospho-L-histidine.. Member of the two-component regulatory system BvgS/BvgA. Phosphorylates BvgA via a four-step phosphorelay in response to environmental signals. This Bordetella parapertussis (strain 12822 / ATCC BAA-587 / NCTC 13253) protein is Virulence sensor protein BvgS (bvgS).